The sequence spans 1318 residues: Maestro heat-like repeat family member 5 (1318 aa).

The tract at residues 1–38 (MDRQCSERPYSCTPTGRVSSAVSQNSRISPPVSTSMKD) is disordered. Polar residues predominate over residues 12 to 38 (CTPTGRVSSAVSQNSRISPPVSTSMKD). Residues 581 to 618 (DELHFLLSHLYIWLASEKAHERQRAVHSCMILLKFLNH) form an HEAT 1 repeat. The tract at residues 676-695 (ESQAPKELSQAHSDGAPLWN) is disordered. HEAT repeat units follow at residues 769–811 (GAKL…SHTC), 840–880 (PTSH…LLAA), 996–1033 (RQIPAVLRQLLPSLQSPQERERKVAILILTKFLYSPVL), 1037–1074 (LPKQAALTVLAQGLHDPSPEVRVLSLQGLSNILFHPDK), 1076–1113 (SLLQGQLRPLLDGFFQSSDQVIVCIMGTVSDTLHRLGA), 1118–1155 (SQSLGVAISTRSFFNDERDGIRAAAMALFGDLVAAMAD), 1164–1200 (QVHQSMVPLLLHLKDQCPAVATQAKFTFYRCAVLLRW), and 1278–1315 (VDTNLLFRTFEHLRSDPEPSIREFATSQLSFLQKVSAR).

The sequence is that of Maestro heat-like repeat family member 5 (MROH5) from Homo sapiens (Human).